The following is a 317-amino-acid chain: tRNA-cytidine(32) 2-sulfurtransferase (317 aa).

The PP-loop motif motif lies at 63-68 (SGGKDS). [4Fe-4S] cluster-binding residues include Cys138, Cys141, and Cys229.

This sequence belongs to the TtcA family. Homodimer. The cofactor is Mg(2+). Requires [4Fe-4S] cluster as cofactor.

Its subcellular location is the cytoplasm. The catalysed reaction is cytidine(32) in tRNA + S-sulfanyl-L-cysteinyl-[cysteine desulfurase] + AH2 + ATP = 2-thiocytidine(32) in tRNA + L-cysteinyl-[cysteine desulfurase] + A + AMP + diphosphate + H(+). It participates in tRNA modification. Catalyzes the ATP-dependent 2-thiolation of cytidine in position 32 of tRNA, to form 2-thiocytidine (s(2)C32). The sulfur atoms are provided by the cysteine/cysteine desulfurase (IscS) system. This chain is tRNA-cytidine(32) 2-sulfurtransferase, found in Janthinobacterium sp. (strain Marseille) (Minibacterium massiliensis).